Reading from the N-terminus, the 369-residue chain is Glutamate 5-kinase (369 aa).

Lys9 lines the ATP pocket. 3 residues coordinate substrate: Ser49, Asp136, and Asn148. ATP contacts are provided by residues 168–169 (TD) and 210–216 (TGGMLTK). A PUA domain is found at 275-355 (QGSIWVDKGA…KGVLIYRDDW (81 aa)).

It belongs to the glutamate 5-kinase family.

Its subcellular location is the cytoplasm. It carries out the reaction L-glutamate + ATP = L-glutamyl 5-phosphate + ADP. It participates in amino-acid biosynthesis; L-proline biosynthesis; L-glutamate 5-semialdehyde from L-glutamate: step 1/2. Functionally, catalyzes the transfer of a phosphate group to glutamate to form L-glutamate 5-phosphate. This is Glutamate 5-kinase from Streptococcus pneumoniae (strain Hungary19A-6).